Here is a 343-residue protein sequence, read N- to C-terminus: MKKSDFNYNLPAELIAQAPLAERSASRLLLVPPAPDAFTDLQVRDLPSLLQPGDLLVFNDTRVIPARLFGQKASGGRVEILIERLLGGQQARAQVGASKSPKAGSRIALDAGGEAEVLGRDGEFYVLQFHVPESLEQWLLHAGRLPLPPYIQREPGMDDRERYQTVFAREVGAVAAPTAGLHFDEPLLAALKDKGVDFGHVTLHVGAGTFQPVRADDLKDHVMHREWLNVGAELVQQVRRTRAAGGRVIGVGTTVVRALESAMRDGELLPFAGETQIFITPGYRIRSVDAMVTNFHLPESTLLMMISAFAGKERVFEAYQHAIAQRYRFFSYGDAMLLFPQAG.

This sequence belongs to the QueA family. As to quaternary structure, monomer.

Its subcellular location is the cytoplasm. It catalyses the reaction 7-aminomethyl-7-carbaguanosine(34) in tRNA + S-adenosyl-L-methionine = epoxyqueuosine(34) in tRNA + adenine + L-methionine + 2 H(+). It participates in tRNA modification; tRNA-queuosine biosynthesis. Its function is as follows. Transfers and isomerizes the ribose moiety from AdoMet to the 7-aminomethyl group of 7-deazaguanine (preQ1-tRNA) to give epoxyqueuosine (oQ-tRNA). The polypeptide is S-adenosylmethionine:tRNA ribosyltransferase-isomerase (Stenotrophomonas maltophilia (strain R551-3)).